A 295-amino-acid chain; its full sequence is Aspartate carbamoyltransferase catalytic subunit (295 aa).

Arginine 49 and threonine 50 together coordinate carbamoyl phosphate. Position 77 (lysine 77) interacts with L-aspartate. Arginine 99, histidine 127, and glutamine 130 together coordinate carbamoyl phosphate. Residues arginine 161 and arginine 212 each coordinate L-aspartate. The carbamoyl phosphate site is built by glycine 251 and proline 252.

Belongs to the aspartate/ornithine carbamoyltransferase superfamily. ATCase family. As to quaternary structure, heterododecamer (2C3:3R2) of six catalytic PyrB chains organized as two trimers (C3), and six regulatory PyrI chains organized as three dimers (R2).

It catalyses the reaction carbamoyl phosphate + L-aspartate = N-carbamoyl-L-aspartate + phosphate + H(+). The protein operates within pyrimidine metabolism; UMP biosynthesis via de novo pathway; (S)-dihydroorotate from bicarbonate: step 2/3. Catalyzes the condensation of carbamoyl phosphate and aspartate to form carbamoyl aspartate and inorganic phosphate, the committed step in the de novo pyrimidine nucleotide biosynthesis pathway. In Campylobacter jejuni (strain RM1221), this protein is Aspartate carbamoyltransferase catalytic subunit.